Here is a 258-residue protein sequence, read N- to C-terminus: Acetylglutamate kinase (258 aa).

Substrate contacts are provided by residues G44–G45, R66, and N158. ATP is bound by residues D181–L186 and I209–T211.

It belongs to the acetylglutamate kinase family. ArgB subfamily. As to quaternary structure, homodimer.

It is found in the cytoplasm. The catalysed reaction is N-acetyl-L-glutamate + ATP = N-acetyl-L-glutamyl 5-phosphate + ADP. It participates in amino-acid biosynthesis; L-arginine biosynthesis; N(2)-acetyl-L-ornithine from L-glutamate: step 2/4. Functionally, catalyzes the ATP-dependent phosphorylation of N-acetyl-L-glutamate. The sequence is that of Acetylglutamate kinase from Shigella flexneri.